We begin with the raw amino-acid sequence, 355 residues long: Receptor-like serine/threonine-protein kinase At1g78530 (355 aa).

The Extracellular portion of the chain corresponds to 1–8 (MANAKETT). Residues 9-29 (FYITISVVAFVIGKIVIALLF) form a helical membrane-spanning segment. Topologically, residues 30–355 (YKRWKRKHTI…YIKLSTRSSF (326 aa)) are cytoplasmic. The region spanning 75–347 (LSNKDILGSG…TEVVKLLEYI (273 aa)) is the Protein kinase domain. Residues 81–89 (LGSGGFGTV) and Lys-103 contribute to the ATP site. Tyr-148 bears the Phosphotyrosine mark. Residue Asp-197 is the Proton acceptor of the active site. 2 positions are modified to phosphoserine: Ser-201 and Ser-230. A phosphothreonine mark is found at Thr-231 and Thr-236. Tyr-244 is modified (phosphotyrosine).

This sequence belongs to the protein kinase superfamily. Ser/Thr protein kinase family.

It is found in the cell membrane. The enzyme catalyses L-seryl-[protein] + ATP = O-phospho-L-seryl-[protein] + ADP + H(+). It catalyses the reaction L-threonyl-[protein] + ATP = O-phospho-L-threonyl-[protein] + ADP + H(+). This chain is Receptor-like serine/threonine-protein kinase At1g78530, found in Arabidopsis thaliana (Mouse-ear cress).